Reading from the N-terminus, the 272-residue chain is Thymidine phosphorylase (272 aa).

It belongs to the thymidine/pyrimidine-nucleoside phosphorylase family. As to quaternary structure, homodimer.

The enzyme catalyses thymidine + phosphate = 2-deoxy-alpha-D-ribose 1-phosphate + thymine. The enzymes which catalyze the reversible phosphorolysis of pyrimidine nucleosides are involved in the degradation of these compounds and in their utilization as carbon and energy sources, or in the rescue of pyrimidine bases for nucleotide synthesis. The protein is Thymidine phosphorylase (deoA) of Metamycoplasma hominis (Mycoplasma hominis).